The primary structure comprises 199 residues: Pyridoxine/pyridoxamine 5'-phosphate oxidase (199 aa).

FMN is bound by residues 44–49, 59–60, lysine 66, and glutamine 91; these read RTVLLK and YT. Residue lysine 49 participates in substrate binding. Substrate is bound by residues tyrosine 109, arginine 113, and serine 117. FMN contacts are provided by residues 126 to 127 and tryptophan 171; that span reads QS. Position 177–179 (177–179) interacts with substrate; the sequence is RLH. Arginine 181 provides a ligand contact to FMN.

Belongs to the pyridoxamine 5'-phosphate oxidase family. Homodimer. FMN serves as cofactor.

The catalysed reaction is pyridoxamine 5'-phosphate + O2 + H2O = pyridoxal 5'-phosphate + H2O2 + NH4(+). It catalyses the reaction pyridoxine 5'-phosphate + O2 = pyridoxal 5'-phosphate + H2O2. Its pathway is cofactor metabolism; pyridoxal 5'-phosphate salvage; pyridoxal 5'-phosphate from pyridoxamine 5'-phosphate: step 1/1. The protein operates within cofactor metabolism; pyridoxal 5'-phosphate salvage; pyridoxal 5'-phosphate from pyridoxine 5'-phosphate: step 1/1. Catalyzes the oxidation of either pyridoxine 5'-phosphate (PNP) or pyridoxamine 5'-phosphate (PMP) into pyridoxal 5'-phosphate (PLP). In Xanthomonas axonopodis pv. citri (strain 306), this protein is Pyridoxine/pyridoxamine 5'-phosphate oxidase.